A 327-amino-acid chain; its full sequence is Polyprenyl transferase andD (327 aa).

Helical transmembrane passes span 49–69 (LGYI…ASIA), 81–101 (ITLL…WDDI), 140–160 (FAFV…MLFF), 174–194 (PQLI…GLNL), 201–221 (IPMA…DIIY), 244–264 (CLDA…VIAG), 271–291 (APFF…LAMA), and 307–327 (CCTS…VWRS).

The protein belongs to the UbiA prenyltransferase family. Mg(2+) is required as a cofactor.

The protein localises to the membrane. The protein operates within secondary metabolite biosynthesis; terpenoid biosynthesis. Functionally, polyprenyl transferase; part of the gene cluster that mediates the biosynthesis of anditomin, a fungal meroterpenoid. The first step of the pathway is the synthesis of 3,5-dimethylorsellinic acid (DMOA) by the polyketide synthase andM. DMOA is then converted to the phthalide compound 5,7-dihydroxy-4,6-dimethylphthalide (DHDMP) by the cytochrome P450 monooxygenase andK, which is further prenylated by the prenyltransferase andD to yield farnesyl-DHDMP. Further epoxidation by the FAD-dependent monooxygenase andE leads to epoxyfarnesyl-DHDMP. The next step involves the terpene cyclase andB that converts epoxyfarnesyl-DHDMP into preandiloid A through opening of the epoxide ring followed by the cyclization of the farnesyl moiety. Preandiloid A is in turn oxidized at the C-3 hydroxyl group to yield preandiloid B by the dehydrogenase andC. The dioxygenase andA is solely responsible for the dehydrogenation of preandiloid B leading to the enone preandiloid C, as well as for the intriguing structural rearrangement to generate the bicyclo[2.2.2]octane core, transforming preandiloid C into andiconin. FAD-binding monooxygenase andJ then produces andilesin D which is reduced by dehydrogenase andI to yield andilesin A. Action of acetyltransferase andG followed by a spontaneous acetate elimination leads then to andilesin B, which is in turn substrate of the short chain dehydrogenase andH to yield andilesin C. Finally, the dioxygenase andF catalyzes the transformation of andilesin C to anditomin. This is Polyprenyl transferase andD from Emericella variicolor (Aspergillus stellatus).